A 61-amino-acid chain; its full sequence is Large ribosomal subunit protein bL28 (61 aa).

The protein belongs to the bacterial ribosomal protein bL28 family.

The protein is Large ribosomal subunit protein bL28 of Lactobacillus johnsonii (strain CNCM I-12250 / La1 / NCC 533).